The sequence spans 367 residues: Hyaluronidase (367 aa).

Intrachain disulfides connect Cys-48–Cys-337 and Cys-214–Cys-226. Residue Asn-108 is glycosylated (N-linked (GlcNAc...) asparagine). Catalysis depends on Glu-138, which acts as the Proton donor. N-linked (GlcNAc...) asparagine glycosylation occurs at Asn-354.

It belongs to the glycosyl hydrolase 56 family.

It catalyses the reaction Random hydrolysis of (1-&gt;4)-linkages between N-acetyl-beta-D-glucosamine and D-glucuronate residues in hyaluronate.. Functionally, may play a role in reproduction. The sequence is that of Hyaluronidase from Polistes annularis (Paper wasp).